The sequence spans 775 residues: Ankyrin repeat and EF-hand domain-containing protein 1 (775 aa).

ANK repeat units follow at residues 47-76, 184-213, 217-246, 250-279, 524-553, 557-586, 590-619, and 623-652; these read DGLS…HPDV, TGRT…EVNA, DRHH…DMGL, DGNT…DLKW, TYKT…NVNA, FLWT…SIDA, NNST…KFQI, and KGHA…NLPK.

The sequence is that of Ankyrin repeat and EF-hand domain-containing protein 1 (Ankef1) from Mus musculus (Mouse).